We begin with the raw amino-acid sequence, 55 residues long: uncharacterized protein (55 aa).

Residues 1 to 25 (MKFVKAIWPFVAVAIVFMFMSAFKF) form the signal peptide.

This is an uncharacterized protein from Bacillus subtilis (strain 168).